A 217-amino-acid chain; its full sequence is 3,4-dihydroxy-2-butanone 4-phosphate synthase (217 aa).

Residues 37 to 38, Asp-42, 150 to 154, and Glu-174 contribute to the D-ribulose 5-phosphate site; these read RE and RRGHT. Glu-38 is a Mg(2+) binding site. His-153 provides a ligand contact to Mg(2+).

This sequence belongs to the DHBP synthase family. Homodimer. Requires Mg(2+) as cofactor. Mn(2+) is required as a cofactor.

It catalyses the reaction D-ribulose 5-phosphate = (2S)-2-hydroxy-3-oxobutyl phosphate + formate + H(+). It functions in the pathway cofactor biosynthesis; riboflavin biosynthesis; 2-hydroxy-3-oxobutyl phosphate from D-ribulose 5-phosphate: step 1/1. Its function is as follows. Catalyzes the conversion of D-ribulose 5-phosphate to formate and 3,4-dihydroxy-2-butanone 4-phosphate. In Shewanella baltica (strain OS223), this protein is 3,4-dihydroxy-2-butanone 4-phosphate synthase.